A 205-amino-acid polypeptide reads, in one-letter code: Regulator of G-protein signaling 4 (205 aa).

3 S-palmitoyl cysteine lipidation sites follow: Cys-2, Cys-12, and Cys-95. In terms of domain architecture, RGS spans 62–178 (SLENLISHEC…LKSRFYLDLV (117 aa)).

In terms of processing, palmitoylated on Cys-2 and/or Cys-12. Phosphorylated by cyclic GMP-dependent protein kinase.

Functionally, inhibits signal transduction by increasing the GTPase activity of G protein alpha subunits thereby driving them into their inactive GDP-bound form. Activity on G(z)-alpha is inhibited by phosphorylation of the G-protein. Activity on G(z)-alpha and G(i)-alpha-1 is inhibited by palmitoylation of the G-protein. This chain is Regulator of G-protein signaling 4 (RGS4), found in Bos taurus (Bovine).